Here is a 340-residue protein sequence, read N- to C-terminus: Olfactory receptor 5T3 (340 aa).

The Extracellular segment spans residues 1-55; that stretch reads MDSTFTGYNLYNLQVKTEMDKLSSGLDIYRNPLKNKTEVTMFILTGFTDDFELQV. N-linked (GlcNAc...) asparagine glycosylation occurs at asparagine 35. Residues 56-76 form a helical membrane-spanning segment; it reads FLFLLFFAIYLFTLIGNLGLV. Residues 77–84 are Cytoplasmic-facing; sequence VLVIEDSW. A helical membrane pass occupies residues 85–105; that stretch reads LHNPMYYFLSVLSFLDACYST. Residues 106-129 are Extracellular-facing; sequence VVTPKMLVNFLAKNKSISFIGCAT. The N-linked (GlcNAc...) asparagine glycan is linked to asparagine 119. Cysteines 127 and 219 form a disulfide. Residues 130–150 traverse the membrane as a helical segment; sequence QMLLFVTFGTTECFLLAAMAY. Over 151–169 the chain is Cytoplasmic; sequence DHYVAIYNPLLYSVSMSPR. Residues 170-190 form a helical membrane-spanning segment; the sequence is VYVPLITASYVAGILHATIHI. Topologically, residues 191–226 are extracellular; it reads VATFSLSFCGSNEIRHVFCDMPPLLAISCSDTHTNQ. The helical transmembrane segment at 227 to 247 threads the bilayer; it reads LLLFYFVGSIEIVTILIVLIS. Topologically, residues 248-267 are cytoplasmic; sequence CDFILLSILKMHSAKGRQKA. The helical transmembrane segment at 268 to 288 threads the bilayer; that stretch reads FSTCGSHLTGVTIYHGTILVS. Over 289-301 the chain is Extracellular; it reads YMRPSSSYASDHD. A helical membrane pass occupies residues 302–322; it reads IIVSIFYTIVIPKLNPIIYSL. Over 323–340 the chain is Cytoplasmic; the sequence is RNKEVKKAVKKMLKLVYK.

It belongs to the G-protein coupled receptor 1 family.

It is found in the cell membrane. Its function is as follows. Odorant receptor. The protein is Olfactory receptor 5T3 (OR5T3) of Homo sapiens (Human).